An 82-amino-acid chain; its full sequence is uncharacterized protein (82 aa).

This is an uncharacterized protein from Treponema pallidum (strain Nichols).